Consider the following 213-residue polypeptide: Orotate phosphoribosyltransferase (213 aa).

K26 is a binding site for 5-phospho-alpha-D-ribose 1-diphosphate. 34–35 (FF) serves as a coordination point for orotate. 5-phospho-alpha-D-ribose 1-diphosphate-binding positions include 72–73 (YK), R99, K100, K103, H105, and 124–132 (DDVITAGTA). Orotate contacts are provided by T128 and R156.

This sequence belongs to the purine/pyrimidine phosphoribosyltransferase family. PyrE subfamily. In terms of assembly, homodimer. Mg(2+) is required as a cofactor.

The enzyme catalyses orotidine 5'-phosphate + diphosphate = orotate + 5-phospho-alpha-D-ribose 1-diphosphate. It functions in the pathway pyrimidine metabolism; UMP biosynthesis via de novo pathway; UMP from orotate: step 1/2. Catalyzes the transfer of a ribosyl phosphate group from 5-phosphoribose 1-diphosphate to orotate, leading to the formation of orotidine monophosphate (OMP). The sequence is that of Orotate phosphoribosyltransferase from Shigella flexneri.